Consider the following 431-residue polypeptide: Galactose-3-O-sulfotransferase 3 (431 aa).

Residues 1–19 (MPPILQRLQQSTKMMSHRK) lie on the Cytoplasmic side of the membrane. The helical; Signal-anchor for type II membrane protein transmembrane segment at 20 to 40 (ILLLVLGCSTVSLLIHQGSQL) threads the bilayer. Residues 41–431 (SWYPKLFPLS…RALPRIPQGT (391 aa)) lie on the Lumenal side of the membrane. Residues Asn91, Asn110, Asn177, and Asn302 are each glycosylated (N-linked (GlcNAc...) asparagine). Residues 400–431 (KRRGGVRSRPESVLDNPPPRPIRALPRIPQGT) are disordered. The segment covering 421–431 (IRALPRIPQGT) has biased composition (low complexity).

This sequence belongs to the galactose-3-O-sulfotransferase family. Requires Mg(2+) as cofactor.

The protein localises to the golgi apparatus. It localises to the golgi stack membrane. Its pathway is protein modification; carbohydrate sulfation. Its function is as follows. Transfers a sulfate to position 3 of non-reducing beta-galactosyl residues in N-glycans and core2-branched O-glycans. Has high activity towards Gal-beta-1,4-GlcNAc, Gal-beta-1,4(Fuc-alpha-1,3)GlcNAc and lower activity towards Gal-beta-1,3(Fuc-alpha-1,4)GlcNAc. The polypeptide is Galactose-3-O-sulfotransferase 3 (Gal3st3) (Mus musculus (Mouse)).